The following is a 218-amino-acid chain: Small ribosomal subunit protein uS5 (218 aa).

Residues 1 to 49 (MPGRQRRDGGSGPAGQNGPNTGDNRGGGDRRGGGRDDRRGGQSAEKSNH) are disordered. A compositionally biased stretch (basic and acidic residues) spans 26–49 (GGGDRRGGGRDDRRGGQSAEKSNH). The region spanning 49-112 (HIERVVTINR…EEARKSFFRV (64 aa)) is the S5 DRBM domain.

Belongs to the universal ribosomal protein uS5 family. In terms of assembly, part of the 30S ribosomal subunit. Contacts proteins S4 and S8.

Functionally, with S4 and S12 plays an important role in translational accuracy. In terms of biological role, located at the back of the 30S subunit body where it stabilizes the conformation of the head with respect to the body. The polypeptide is Small ribosomal subunit protein uS5 (Rhodococcus jostii (strain RHA1)).